Here is a 541-residue protein sequence, read N- to C-terminus: Beta-hexosaminidase 1 (541 aa).

Residues 1–20 form the signal peptide; it reads MSTNLLRLILLFITLSITSS. N-linked (GlcNAc...) asparagine glycans are attached at residues N44 and N304. A disulfide bridge links C295 with C337. E332 (proton donor) is an active-site residue. N-linked (GlcNAc...) asparagine glycans are attached at residues N340, N352, and N497. A disulfide bridge connects residues C511 and C538.

The protein belongs to the glycosyl hydrolase 20 family. Post-translationally, N-glycosylated. Expressed in roots, leaves, stems, flowers and siliques.

It localises to the vacuole. The catalysed reaction is Hydrolysis of terminal non-reducing N-acetyl-D-hexosamine residues in N-acetyl-beta-D-hexosaminides.. Inhibited by N-acetylcastanospermine, 2-acet-amido-1,2-dideoxynojirimycin and PUGNAc. Its function is as follows. Has a broad substrate specificity. Can use synthetic substrates such as pyridylaminated chitotriose, pyridylaminated chitobiose, p-nitrophenyl-beta-N-acetylglucosaminide, p-nitrophenyl-2-acetamido-2-deoxy-beta-D-glucopyranoside (pNP-GlcNAc), p-nitrophenyl-2-acetamido-2-deoxy-beta-D-galactopyranoside (pNP-GalNAc), 4-methylumbelliferyl-2-acetamido-2-deoxy-beta-D-glucopyranoside (MU-GlcNAc), and 4-methylumbelliferyl-6-sulfo-2-acetamido-2-deoxy-beta-D-glucopyranoside (MU-GlcNAc-6SO(4)) as substrates. Removes terminal GlcNAc residues from alpha1,3- and alpha1,6-mannosyl branches of biantennary N-glycans without any strict branch preference. Required for the presence of paucimannosidic N-glycans in glycoproteins of roots and, to a lower extent, of leaves. The chain is Beta-hexosaminidase 1 (HEXO1) from Arabidopsis thaliana (Mouse-ear cress).